A 374-amino-acid chain; its full sequence is Transcription termination factor 1, mitochondrial (374 aa).

Residues 1–37 constitute a mitochondrion transit peptide; it reads MASRNIWRVRRNFLFDLRGWVPQYSAEVFLKSIPFRP. Interaction with DNA stretches follow at residues 146–147, 224–228, 301–308, 332–335, and 361–368; these read RS, QSTKR, SEKKFNDK, SIHT, and SQRRYEAK.

The protein belongs to the mTERF family. As to quaternary structure, monomer. In terms of processing, is a phosphoprotein. While the DNA-binding activity is unaffected by the phosphorylation/dephosphorylation state, only the phosphorylated form of the protein is active for termination activity. Functioning seems to be regulated by phosphorylation.

The protein localises to the mitochondrion. Functionally, transcription termination factor. Binds to a 28 bp region within the tRNA(Leu(uur)) gene at a position immediately adjacent to and downstream of the 16S rRNA gene; this region comprises a tridecamer sequence critical for directing accurate termination. Binds DNA along the major grove and promotes DNA bending and partial unwinding. Promotes base flipping. Transcription termination activity appears to be polarized with highest specificity for transcripts initiated on the light strand. The sequence is that of Transcription termination factor 1, mitochondrial (Mterf1) from Rattus norvegicus (Rat).